We begin with the raw amino-acid sequence, 299 residues long: Large ribosomal subunit protein uL18 (299 aa).

The protein belongs to the universal ribosomal protein uL18 family. Component of the large ribosomal subunit (LSU). Interacts with Fmr1 to form the RNA-induced silencing complex (RISC), a ribonucleoprotein (RNP) complex involved in translation regulation, other components of the complex are Rm62, RpL11, AGO2 and Dcr-1.

Its subcellular location is the cytoplasm. It localises to the nucleus. Component of the ribosome, a large ribonucleoprotein complex responsible for the synthesis of proteins in the cell. The small ribosomal subunit (SSU) binds messenger RNAs (mRNAs) and translates the encoded message by selecting cognate aminoacyl-transfer RNA (tRNA) molecules. The large subunit (LSU) contains the ribosomal catalytic site termed the peptidyl transferase center (PTC), which catalyzes the formation of peptide bonds, thereby polymerizing the amino acids delivered by tRNAs into a polypeptide chain. The nascent polypeptides leave the ribosome through a tunnel in the LSU and interact with protein factors that function in enzymatic processing, targeting, and the membrane insertion of nascent chains at the exit of the ribosomal tunnel. In Drosophila melanogaster (Fruit fly), this protein is Large ribosomal subunit protein uL18 (RpL5).